A 31-amino-acid polypeptide reads, in one-letter code: Chassatide C5 (31 aa).

The cyclopeptide (Gly-Asn) cross-link spans 1–31 (GVIPCGESCVFIPCISSVVGCSCKNKVCYRN). 3 cysteine pairs are disulfide-bonded: Cys-5-Cys-21, Cys-9-Cys-23, and Cys-14-Cys-28.

Post-translationally, this is a cyclic peptide. As to expression, expressed in pedicel, root and stem but not in leaf and fruit (at protein level).

Probably participates in a plant defense mechanism. The chain is Chassatide C5 from Chassalia chartacea (Chassalia curviflora).